The chain runs to 523 residues: UDP-glucuronosyltransferase 2B16 (523 aa).

A signal peptide spans 1–16 (LLLLLQLSCCFSSGSC). At lysine 129 the chain carries N6-succinyllysine. The N-linked (GlcNAc...) asparagine glycan is linked to asparagine 309. A helical transmembrane segment spans residues 487 to 503 (VIGFLLACLTITTYLVI).

The protein belongs to the UDP-glycosyltransferase family.

The protein resides in the microsome membrane. It is found in the endoplasmic reticulum membrane. The enzyme catalyses glucuronate acceptor + UDP-alpha-D-glucuronate = acceptor beta-D-glucuronoside + UDP + H(+). UDPGT is of major importance in the conjugation and subsequent elimination of potentially toxic xenobiotics and endogenous compounds. Acts on small phenolic agents such as 2-beta-naphthol and 4-methylumbelliferone as well as bulky phenolic compounds like 2-hydroxy- and 4-hydroxybiphenyl. In contrast to 2B13 it is active toward 4-hydroxyesterone. The protein is UDP-glucuronosyltransferase 2B16 (UGT2B16) of Oryctolagus cuniculus (Rabbit).